Here is a 160-residue protein sequence, read N- to C-terminus: Phosphopantetheine adenylyltransferase (160 aa).

S9 contacts substrate. ATP is bound by residues 9 to 10 (SF) and H17. Residues K41, V73, and K87 each coordinate substrate. Residues 88–90 (GLR), E98, and 122–128 (YSFVSSS) contribute to the ATP site.

This sequence belongs to the bacterial CoaD family. Homohexamer. Mg(2+) is required as a cofactor.

Its subcellular location is the cytoplasm. The catalysed reaction is (R)-4'-phosphopantetheine + ATP + H(+) = 3'-dephospho-CoA + diphosphate. It functions in the pathway cofactor biosynthesis; coenzyme A biosynthesis; CoA from (R)-pantothenate: step 4/5. In terms of biological role, reversibly transfers an adenylyl group from ATP to 4'-phosphopantetheine, yielding dephospho-CoA (dPCoA) and pyrophosphate. The polypeptide is Phosphopantetheine adenylyltransferase (Mycobacterium avium (strain 104)).